Consider the following 48-residue polypeptide: Protein TUNAR (48 aa).

The interval 1 to 20 (MVITSGNDEDRGGQEKESKE) is disordered. The span at 8-20 (DEDRGGQEKESKE) shows a compositional bias: basic and acidic residues. The chain crosses the membrane as a helical span at residues 24–44 (LAMLGIIGTILNLIVIIFVYI).

Interacts with ATPase ATP2A2/SERCA2. Interacts with ATPase ATP2A3/SERCA3; the interaction occurs at low levels in low glucose conditions and is increased by high glucose levels. In the adult, expressed in Purkinje cells in the cerebellum, in motor neurons and interneurons in the spinal cord and in neurons of the cortex, hippocampus and thalamus (at protein level). Also detected in the developing cortex, hippocampus and thalamus at embryonic day E15.5 (at protein level).

It is found in the endoplasmic reticulum membrane. The protein resides in the extracellular vesicle membrane. In neurons, plays a role in the regulation of intracellular Ca(2+), possibly by acting as an activator of ATP2A2/SERCA2, thus increasing the efficiency with which Ca(2+) is removed from the cytoplasm. Inhibits differentiation of embryonic stem cells into neurons and inhibits neurite outgrowth, likely as a result of its role in intracellular Ca(2+) regulation. In pancreatic beta cells, lowers Ca(2+) levels in the endoplasmic reticulum and enhances glucose-stimulated insulin secretion. The chain is Protein TUNAR from Mus musculus (Mouse).